We begin with the raw amino-acid sequence, 230 residues long: Demethylmenaquinone methyltransferase (230 aa).

S-adenosyl-L-methionine contacts are provided by residues threonine 62, aspartate 80, 100-101, and serine 117; that span reads DA.

This sequence belongs to the class I-like SAM-binding methyltransferase superfamily. MenG/UbiE family.

The catalysed reaction is a 2-demethylmenaquinol + S-adenosyl-L-methionine = a menaquinol + S-adenosyl-L-homocysteine + H(+). It functions in the pathway quinol/quinone metabolism; menaquinone biosynthesis; menaquinol from 1,4-dihydroxy-2-naphthoate: step 2/2. Its function is as follows. Methyltransferase required for the conversion of demethylmenaquinol (DMKH2) to menaquinol (MKH2). This chain is Demethylmenaquinone methyltransferase, found in Mycolicibacterium paratuberculosis (strain ATCC BAA-968 / K-10) (Mycobacterium paratuberculosis).